The following is a 315-amino-acid chain: Tyrosine--tRNA ligase (315 aa).

Tyr-32 lines the L-tyrosine pocket. A 'HIGH' region motif is present at residues 37–45; it reads PSGEIHLGH. Positions 152, 156, 159, and 174 each coordinate L-tyrosine. The 'KMSKS' region signature appears at 208–212; that stretch reads KMSSS. Position 211 (Ser-211) interacts with ATP.

Belongs to the class-I aminoacyl-tRNA synthetase family. TyrS type 3 subfamily. In terms of assembly, homodimer.

The protein localises to the cytoplasm. It carries out the reaction tRNA(Tyr) + L-tyrosine + ATP = L-tyrosyl-tRNA(Tyr) + AMP + diphosphate + H(+). Its function is as follows. Catalyzes the attachment of tyrosine to tRNA(Tyr) in a two-step reaction: tyrosine is first activated by ATP to form Tyr-AMP and then transferred to the acceptor end of tRNA(Tyr). This Methanoculleus marisnigri (strain ATCC 35101 / DSM 1498 / JR1) protein is Tyrosine--tRNA ligase.